The sequence spans 212 residues: ATP-dependent dethiobiotin synthetase BioD (212 aa).

Residue Gly-13 to Val-18 coordinates ATP. Mg(2+) is bound at residue Thr-17. Residue Lys-33 is part of the active site. Substrate is bound at residue Ser-37. Glu-100 is a binding site for Mg(2+). ATP contacts are provided by residues Glu-100–Gly-103 and Pro-184–Leu-186.

This sequence belongs to the dethiobiotin synthetase family. In terms of assembly, homodimer. Requires Mg(2+) as cofactor.

The protein resides in the cytoplasm. It carries out the reaction (7R,8S)-7,8-diammoniononanoate + CO2 + ATP = (4R,5S)-dethiobiotin + ADP + phosphate + 3 H(+). Its pathway is cofactor biosynthesis; biotin biosynthesis; biotin from 7,8-diaminononanoate: step 1/2. Its function is as follows. Catalyzes a mechanistically unusual reaction, the ATP-dependent insertion of CO2 between the N7 and N8 nitrogen atoms of 7,8-diaminopelargonic acid (DAPA, also called 7,8-diammoniononanoate) to form a ureido ring. In Brucella anthropi (strain ATCC 49188 / DSM 6882 / CCUG 24695 / JCM 21032 / LMG 3331 / NBRC 15819 / NCTC 12168 / Alc 37) (Ochrobactrum anthropi), this protein is ATP-dependent dethiobiotin synthetase BioD.